We begin with the raw amino-acid sequence, 420 residues long: Serine--tRNA ligase (420 aa).

229–231 (TAE) provides a ligand contact to L-serine. Residue 260 to 262 (RAE) participates in ATP binding. Glu-283 lines the L-serine pocket. 347 to 350 (EISS) is a binding site for ATP. Ser-382 provides a ligand contact to L-serine.

This sequence belongs to the class-II aminoacyl-tRNA synthetase family. Type-1 seryl-tRNA synthetase subfamily. In terms of assembly, homodimer. The tRNA molecule binds across the dimer.

The protein localises to the cytoplasm. The catalysed reaction is tRNA(Ser) + L-serine + ATP = L-seryl-tRNA(Ser) + AMP + diphosphate + H(+). It catalyses the reaction tRNA(Sec) + L-serine + ATP = L-seryl-tRNA(Sec) + AMP + diphosphate + H(+). Its pathway is aminoacyl-tRNA biosynthesis; selenocysteinyl-tRNA(Sec) biosynthesis; L-seryl-tRNA(Sec) from L-serine and tRNA(Sec): step 1/1. Functionally, catalyzes the attachment of serine to tRNA(Ser). Is also able to aminoacylate tRNA(Sec) with serine, to form the misacylated tRNA L-seryl-tRNA(Sec), which will be further converted into selenocysteinyl-tRNA(Sec). The protein is Serine--tRNA ligase of Caldicellulosiruptor bescii (strain ATCC BAA-1888 / DSM 6725 / KCTC 15123 / Z-1320) (Anaerocellum thermophilum).